Reading from the N-terminus, the 623-residue chain is Sodium-coupled monocarboxylate transporter 2 (623 aa).

Topologically, residues 1-10 (METVGRFQAG) are extracellular. Residues 11–31 (DYVVFACLFVVSSGIGVFFAI) form a helical membrane-spanning segment. The Cytoplasmic portion of the chain corresponds to 32-50 (KERNKAPSKEFLVGGRQMS). Residues 51-71 (CGPVALSLTASFMSAVTVIGA) form a helical membrane-spanning segment. The Extracellular segment spans residues 72–83 (PADVYRFGASYV). Residues 84–104 (IFGVAYTFVVFFTAELFLPVF) form a helical membrane-spanning segment. Topologically, residues 105 to 129 (YRSGITSTYEYLELRFCKLVRVAAT) are cytoplasmic. Residues 130–150 (LIYIIQTILYTGVVVYAPALA) form a helical membrane-spanning segment. Topologically, residues 151 to 158 (LNQVTGFD) are extracellular. Residues 159-179 (LWGSIFATGIVCTFYCTLGGL) form a helical membrane-spanning segment. Residues 180–181 (KA) are Cytoplasmic-facing. A helical membrane pass occupies residues 182–202 (VVWTDAFQMVVMVVGFLTVLI). Residues 203–236 (QGSSRAGGIENVWSTSRTGGRLQVFDFDVSPLRR) are Extracellular-facing. The helical transmembrane segment at 237-257 (HTFWTLSVGGTFTWLGIYGVN) threads the bilayer. Residues 258-276 (QSTIQRCISCKTEGHARWA) are Cytoplasmic-facing. Residues 277-297 (LYLNLLGLWIILFCAVVSGLI) traverse the membrane as a helical segment. Over 298-322 (MYSYYSHCDPWSSGLISAPDQLMPY) the chain is Extracellular. The chain crosses the membrane as a helical span at residues 323–343 (FVMEILGAFPGLPGLFVACAF). Residues 344–386 (SGTLSTVAASINALATVMYEDFVSQCFPDLSNRAASWISKALC) lie on the Cytoplasmic side of the membrane. The chain crosses the membrane as a helical span at residues 387–407 (VAFGVACTTMAVAASYMGGIV). Over 408–412 (QAALS) the chain is Extracellular. A helical transmembrane segment spans residues 413-433 (IHGMCGGPVLGLFSLGILFPF). Over 434–438 (TNLKG) the chain is Cytoplasmic. The helical transmembrane segment at 439 to 459 (AVGGLIVGISLSFWVGVGAFI) threads the bilayer. Topologically, residues 460–510 (YPAPSNNTHALELNTAGCNITAAAFEPTSATVTQLTSDRNWLADSWYSMSY) are extracellular. N-linked (GlcNAc...) asparagine glycosylation is found at Asn-465 and Asn-478. A helical transmembrane segment spans residues 511–531 (LYYSAVGFIGTVAAGLLITLL). The Cytoplasmic portion of the chain corresponds to 532-623 (TGPMDPKLLK…NETSIVQKKL (92 aa)).

It belongs to the sodium:solute symporter (SSF) (TC 2.A.21) family.

It localises to the apical cell membrane. The catalysed reaction is (S)-lactate(out) + Na(+)(out) = (S)-lactate(in) + Na(+)(in). It catalyses the reaction nicotinate(out) + Na(+)(out) = nicotinate(in) + Na(+)(in). The enzyme catalyses pyruvate(out) + Na(+)(out) = pyruvate(in) + Na(+)(in). It carries out the reaction propanoate(out) + Na(+)(out) = propanoate(in) + Na(+)(in). The catalysed reaction is butanoate(out) + Na(+)(out) = butanoate(in) + Na(+)(in). It catalyses the reaction acetoacetate(out) + Na(+)(out) = acetoacetate(in) + Na(+)(in). Functionally, acts as an electroneutral and low-affinity sodium (Na(+))-dependent sodium-coupled solute transporter. Catalyzes the transport across the plasma membrane of many monocarboxylates such as lactate, pyruvate, nicotinate, propionate, butyrate and beta-D-hydroxybutyrate. The chain is Sodium-coupled monocarboxylate transporter 2 (slc5a12) from Danio rerio (Zebrafish).